The chain runs to 545 residues: CTP synthase (545 aa).

The interval methionine 1–tyrosine 266 is amidoligase domain. Position 13 (serine 13) interacts with CTP. Serine 13 serves as a coordination point for UTP. Residues serine 14–isoleucine 19 and aspartate 71 each bind ATP. Mg(2+) is bound by residues aspartate 71 and glutamate 140. Residues aspartate 147–glutamate 149, lysine 187–glutamine 192, and lysine 223 each bind CTP. UTP-binding positions include lysine 187–glutamine 192 and lysine 223. Lysine 239–alanine 241 contacts ATP. Positions arginine 292–lysine 543 constitute a Glutamine amidotransferase type-1 domain. Glycine 353 serves as a coordination point for L-glutamine. Residue cysteine 380 is the Nucleophile; for glutamine hydrolysis of the active site. L-glutamine is bound by residues leucine 381 to glutamine 384, glutamate 404, and arginine 471. Active-site residues include histidine 516 and glutamate 518.

This sequence belongs to the CTP synthase family. In terms of assembly, homotetramer.

It carries out the reaction UTP + L-glutamine + ATP + H2O = CTP + L-glutamate + ADP + phosphate + 2 H(+). It catalyses the reaction L-glutamine + H2O = L-glutamate + NH4(+). The catalysed reaction is UTP + NH4(+) + ATP = CTP + ADP + phosphate + 2 H(+). It functions in the pathway pyrimidine metabolism; CTP biosynthesis via de novo pathway; CTP from UDP: step 2/2. Allosterically activated by GTP, when glutamine is the substrate; GTP has no effect on the reaction when ammonia is the substrate. The allosteric effector GTP functions by stabilizing the protein conformation that binds the tetrahedral intermediate(s) formed during glutamine hydrolysis. Inhibited by the product CTP, via allosteric rather than competitive inhibition. Functionally, catalyzes the ATP-dependent amination of UTP to CTP with either L-glutamine or ammonia as the source of nitrogen. Regulates intracellular CTP levels through interactions with the four ribonucleotide triphosphates. The sequence is that of CTP synthase from Acinetobacter baylyi (strain ATCC 33305 / BD413 / ADP1).